We begin with the raw amino-acid sequence, 79 residues long: Small ribosomal subunit protein bS18 (79 aa).

Belongs to the bacterial ribosomal protein bS18 family. As to quaternary structure, part of the 30S ribosomal subunit. Forms a tight heterodimer with protein bS6.

Functionally, binds as a heterodimer with protein bS6 to the central domain of the 16S rRNA, where it helps stabilize the platform of the 30S subunit. This chain is Small ribosomal subunit protein bS18, found in Aster yellows witches'-broom phytoplasma (strain AYWB).